Consider the following 176-residue polypeptide: Translation initiation factor IF-3 (176 aa).

Belongs to the IF-3 family. In terms of assembly, monomer.

The protein localises to the cytoplasm. In terms of biological role, IF-3 binds to the 30S ribosomal subunit and shifts the equilibrium between 70S ribosomes and their 50S and 30S subunits in favor of the free subunits, thus enhancing the availability of 30S subunits on which protein synthesis initiation begins. The chain is Translation initiation factor IF-3 from Streptococcus uberis (strain ATCC BAA-854 / 0140J).